The chain runs to 227 residues: PKHD-type hydroxylase Veis_3084 (227 aa).

The interval D27–E51 is disordered. Polar residues predominate over residues A33–P47. Positions R78–S179 constitute a Fe2OG dioxygenase domain. Positions 97, 99, and 160 each coordinate Fe cation. R170 provides a ligand contact to 2-oxoglutarate.

It depends on Fe(2+) as a cofactor. L-ascorbate serves as cofactor.

In Verminephrobacter eiseniae (strain EF01-2), this protein is PKHD-type hydroxylase Veis_3084.